The primary structure comprises 281 residues: Tetraspanin-5 (281 aa).

At 1-7 the chain is on the cytoplasmic side; sequence MNRMSNT. Residues 8–28 traverse the membrane as a helical segment; the sequence is VIGFLNILTLISSIVLLGSAL. The Extracellular segment spans residues 29 to 44; it reads WMGRSKTTCEHFLQKP. Residues 45–65 form a helical membrane-spanning segment; it reads LLILGLAILILSVAGLVGACC. Over 66–74 the chain is Cytoplasmic; the sequence is DVAWVLWVY. Residues 75–95 form a helical membrane-spanning segment; the sequence is LFFMVFIIVALMGLTLFGFIV. Over 96–221 the chain is Extracellular; that stretch reads TSHSGGVVVD…TVRRDWHKLS (126 aa). The helical transmembrane segment at 222–242 threads the bilayer; the sequence is LVNVIVVIFLIAVYCVGCCAF. Residues 243-281 are Cytoplasmic-facing; it reads KNAKRPQHYGFPYGRYGMSKSRPGWEQSWSRWWHGRDRY.

Belongs to the tetraspanin (TM4SF) family.

It is found in the membrane. May be involved in the regulation of cell differentiation. The protein is Tetraspanin-5 (TET5) of Arabidopsis thaliana (Mouse-ear cress).